Here is an 89-residue protein sequence, read N- to C-terminus: MALLQEKKHEIINAYQVHETDTGSADVQVAMLTERISKLSEHLKTNKKDHSSRRGLLKMIGQRKRLLTYIMKKDQAHYRELIKRLGIRG.

It belongs to the universal ribosomal protein uS15 family. As to quaternary structure, part of the 30S ribosomal subunit. Forms a bridge to the 50S subunit in the 70S ribosome, contacting the 23S rRNA.

In terms of biological role, one of the primary rRNA binding proteins, it binds directly to 16S rRNA where it helps nucleate assembly of the platform of the 30S subunit by binding and bridging several RNA helices of the 16S rRNA. Its function is as follows. Forms an intersubunit bridge (bridge B4) with the 23S rRNA of the 50S subunit in the ribosome. This chain is Small ribosomal subunit protein uS15, found in Acaryochloris marina (strain MBIC 11017).